The primary structure comprises 418 residues: Serine hydroxymethyltransferase (418 aa).

(6S)-5,6,7,8-tetrahydrofolate is bound by residues L121 and 125–127; that span reads GHL. The residue at position 230 (K230) is an N6-(pyridoxal phosphate)lysine. 355 to 357 serves as a coordination point for (6S)-5,6,7,8-tetrahydrofolate; that stretch reads SPF.

The protein belongs to the SHMT family. In terms of assembly, homodimer. Requires pyridoxal 5'-phosphate as cofactor.

It localises to the cytoplasm. The catalysed reaction is (6R)-5,10-methylene-5,6,7,8-tetrahydrofolate + glycine + H2O = (6S)-5,6,7,8-tetrahydrofolate + L-serine. It functions in the pathway one-carbon metabolism; tetrahydrofolate interconversion. It participates in amino-acid biosynthesis; glycine biosynthesis; glycine from L-serine: step 1/1. In terms of biological role, catalyzes the reversible interconversion of serine and glycine with tetrahydrofolate (THF) serving as the one-carbon carrier. This reaction serves as the major source of one-carbon groups required for the biosynthesis of purines, thymidylate, methionine, and other important biomolecules. Also exhibits THF-independent aldolase activity toward beta-hydroxyamino acids, producing glycine and aldehydes, via a retro-aldol mechanism. In Streptococcus pneumoniae (strain P1031), this protein is Serine hydroxymethyltransferase.